The chain runs to 308 residues: D-alanine--D-alanine ligase (308 aa).

Positions Lys102 to Glu302 constitute an ATP-grasp domain. An ATP-binding site is contributed by Pro128–Thr183. Asp252, Glu269, and Asn271 together coordinate Mg(2+).

It belongs to the D-alanine--D-alanine ligase family. The cofactor is Mg(2+). Requires Mn(2+) as cofactor.

The protein localises to the cytoplasm. It carries out the reaction 2 D-alanine + ATP = D-alanyl-D-alanine + ADP + phosphate + H(+). Its pathway is cell wall biogenesis; peptidoglycan biosynthesis. Functionally, cell wall formation. This is D-alanine--D-alanine ligase from Brucella anthropi (strain ATCC 49188 / DSM 6882 / CCUG 24695 / JCM 21032 / LMG 3331 / NBRC 15819 / NCTC 12168 / Alc 37) (Ochrobactrum anthropi).